Consider the following 528-residue polypeptide: Atypical kinase COQ8B, mitochondrial (528 aa).

The chain crosses the membrane as a helical span at residues 93-109 (LASFGGLAVGLGLGALA). The KxGQ motif motif lies at 151–154 (KIGQ). The Protein kinase domain occupies 187–419 (MMKVLEEELG…DRVLQKSQDL (233 aa)). Residues 212-215 (AAAS) carry the AAAS motif motif. ATP-binding positions include Ser-215, Lys-233, and 320 to 323 (MELA). The Proton acceptor role is filled by Asp-363. ATP is bound by residues Asn-368 and Asp-382.

It belongs to the protein kinase superfamily. ADCK protein kinase family. In terms of assembly, homodimer; homodimerizes via its transmembrane region. Interacts with COQ6 and COQ7. Interacts with the multi-subunit COQ enzyme complex, composed of at least COQ3, COQ4, COQ5, COQ6, COQ7 and COQ9. In the kidney, expressed in glomeruli, predominantly in podocyte foot precesses, as well as in proximal tubules and collecting ducts (at protein level).

The protein resides in the mitochondrion membrane. The protein localises to the cytoplasm. Its subcellular location is the cytosol. It localises to the cell membrane. The protein operates within cofactor biosynthesis; ubiquinone biosynthesis. Functionally, atypical kinase involved in the biosynthesis of coenzyme Q, also named ubiquinone, an essential lipid-soluble electron transporter for aerobic cellular respiration. Its substrate specificity is still unclear: may act as a protein kinase that mediates phosphorylation of COQ3. According to other reports, acts as a small molecule kinase, possibly a lipid kinase that phosphorylates a prenyl lipid in the ubiquinone biosynthesis pathway, as suggested by its ability to bind coenzyme Q lipid intermediates. However, the small molecule kinase activity was not confirmed by another publication. Required for podocyte migration. The polypeptide is Atypical kinase COQ8B, mitochondrial (Rattus norvegicus (Rat)).